Consider the following 86-residue polypeptide: Toxin Td8 (86 aa).

Positions 1–20 (MTRFVLFLSCFFLIGMVVEC) are cleaved as a signal peptide. Residues 21–83 (KDGYLVGDDG…IWNSATNRCR (63 aa)) enclose the LCN-type CS-alpha/beta domain. Disulfide bonds link Cys-31–Cys-82, Cys-35–Cys-57, Cys-43–Cys-63, and Cys-47–Cys-65. The residue at position 83 (Arg-83) is an Arginine amide.

As to expression, expressed by the venom gland.

It localises to the secreted. Functionally, beta toxins bind voltage-independently at site-4 of sodium channels (Nav) and shift the voltage of activation toward more negative potentials thereby affecting sodium channel activation and promoting spontaneous and repetitive firing. The sequence is that of Toxin Td8 from Tityus discrepans (Venezuelan scorpion).